The following is a 125-amino-acid chain: Neuraminyllactose-binding hemagglutinin (125 aa).

The segment at 92-97 is N-acetyl-neuraminyl-alpha(2,3)-lactose binding motif; the sequence is KRTIQK.

It is found in the cell outer membrane. This is Neuraminyllactose-binding hemagglutinin (hpaA) from Helicobacter pylori (Campylobacter pylori).